An 813-amino-acid polypeptide reads, in one-letter code: Microtubule-associated protein 6 (813 aa).

Residues Cys-5, Cys-10, and Cys-11 are each lipidated (S-palmitoyl cysteine). Disordered stretches follow at residues 36 to 283, 314 to 651, and 756 to 813; these read ATEH…AAAD, VKPI…KDES, and PLKD…ESSP. Pro residues predominate over residues 41–50; that stretch reads GAPPQPPPPQ. The span at 51-62 shows a compositional bias: low complexity; sequence QQAQPALAPPSA. Over residues 100-112 the composition is skewed to gly residues; that stretch reads GRSGPGPGLGSGS. Ser-102 carries the phosphoserine modification. The mn 1 stretch occupies residues 118 to 141; that stretch reads DSVMRQDYRAWKVQRPEPSCRPRS. Positions 121 to 141 are enriched in basic and acidic residues; sequence MRQDYRAWKVQRPEPSCRPRS. A calmodulin-binding region spans residues 126 to 140; that stretch reads RAWKVQRPEPSCRPR. The residue at position 143 (Tyr-143) is a Phosphotyrosine. The segment covering 149-173 has biased composition (basic and acidic residues); sequence PFERETQYQKDFRAWPLPRRGDHPW. Residues 153–176 are mn 2; it reads ETQYQKDFRAWPLPRRGDHPWIPK. A calmodulin-binding region spans residues 162–176; it reads AWPLPRRGDHPWIPK. Position 187 is a phosphoserine (Ser-187). 4 calmodulin-binding regions span residues 189 to 203, 306 to 320, 357 to 371, and 384 to 398; these read PILGAPKRRPQSQER, RAWTDIKPVKPIKAK, RRRIRSLYSEPFKEP, and PKKTSASHKPTRKAK. Positions 298 to 321 are mn 3; the sequence is SSSYRNEFRAWTDIKPVKPIKAKP. Basic and acidic residues predominate over residues 367 to 376; sequence PFKEPPKVEK. Residues 383 to 398 show a composition bias toward basic residues; the sequence is KPKKTSASHKPTRKAK. A compositionally biased stretch (basic and acidic residues) spans 420-439; sequence KPDDKEQSKEMNNKLAEAKE. The segment covering 443-454 has biased composition (polar residues); sequence QPVSDSSKTQGP. Positions 637–651 are enriched in basic and acidic residues; that stretch reads KDQDPMVPEHPKDES. Ser-812 is modified (phosphoserine).

It belongs to the STOP family. In terms of assembly, interacts with calmodulin (via C-terminus); the interaction is dependent on Ca(2+). Interacts (via C-terminus) with TMEM106B (via N-terminus). Interacts with ZDHHC17 (via ANK repeats). Interacts with ZDHHC13 (via ANK repeats). Palmitoylated. Probably depalmitoylated by ABHD17A, ABHD17B and ABHD17C. During neuronal polarization, palmitoylation and depalmitoylation cycles regulate MAP6 shuttling between secretory vesicles and microtubules, and its polarized distribution in the axon. Expressed in brain (at protein level). Expressed in spinal cord. Isoform 2 expression is up-regulated in the prefrontal cortex (Brodmann's area 46) of patients with schizophrenia (postmortem brain study).

It localises to the cytoplasm. The protein resides in the cytoskeleton. The protein localises to the golgi apparatus. Its subcellular location is the cell projection. It is found in the axon. It localises to the dendrite. The protein resides in the cytoplasmic vesicle. The protein localises to the secretory vesicle membrane. Involved in microtubule stabilization in many cell types, including neuronal cells. Specifically has microtubule cold stabilizing activity. Involved in dendrite morphogenesis and maintenance by regulating lysosomal trafficking via its interaction with TMEM106B. Regulates KIF5A-mediated axonal cargo transport. Regulates axonal growth during neuron polarization. This is Microtubule-associated protein 6 (MAP6) from Homo sapiens (Human).